Reading from the N-terminus, the 79-residue chain is Translation initiation factor IF-1, chloroplastic (79 aa).

The S1-like domain maps to 1–74; it reads MTRKNIDLIE…HRGRITFRLR (74 aa).

This sequence belongs to the IF-1 family. As to quaternary structure, component of the 30S ribosomal translation pre-initiation complex which assembles on the 30S ribosome in the order IF-2 and IF-3, IF-1 and N-formylmethionyl-tRNA(fMet); mRNA recruitment can occur at any time during PIC assembly.

It is found in the plastid. Its subcellular location is the chloroplast. One of the essential components for the initiation of protein synthesis. Stabilizes the binding of IF-2 and IF-3 on the 30S subunit to which N-formylmethionyl-tRNA(fMet) subsequently binds. Helps modulate mRNA selection, yielding the 30S pre-initiation complex (PIC). Upon addition of the 50S ribosomal subunit IF-1, IF-2 and IF-3 are released leaving the mature 70S translation initiation complex. The polypeptide is Translation initiation factor IF-1, chloroplastic (Chlorella vulgaris (Green alga)).